Here is a 181-residue protein sequence, read N- to C-terminus: Ribulose bisphosphate carboxylase small subunit 2B, chloroplastic (181 aa).

A chloroplast-targeting transit peptide spans 1–54 (MASSMFSSTAVVTSPAQATMVAPFTGLKSSASFPVTRKANNDITSITSNGGRVS).

The protein belongs to the RuBisCO small chain family. As to quaternary structure, heterohexadecamer of 8 large and 8 small subunits.

The protein resides in the plastid. It localises to the chloroplast. Its function is as follows. RuBisCO catalyzes two reactions: the carboxylation of D-ribulose 1,5-bisphosphate, the primary event in carbon dioxide fixation, as well as the oxidative fragmentation of the pentose substrate. Both reactions occur simultaneously and in competition at the same active site. Although the small subunit is not catalytic it is essential for maximal activity. In Arabidopsis thaliana (Mouse-ear cress), this protein is Ribulose bisphosphate carboxylase small subunit 2B, chloroplastic (RBCS-2B).